The sequence spans 672 residues: Acetoacetyl-CoA synthetase (672 aa).

It belongs to the ATP-dependent AMP-binding enzyme family.

The protein localises to the cytoplasm. It is found in the cytosol. The enzyme catalyses acetoacetate + ATP + CoA = acetoacetyl-CoA + AMP + diphosphate. Its function is as follows. Converts acetoacetate to acetoacetyl-CoA in the cytosol. Ketone body-utilizing enzyme, responsible for the synthesis of cholesterol and fatty acids. In Macaca fascicularis (Crab-eating macaque), this protein is Acetoacetyl-CoA synthetase (AACS).